Here is a 484-residue protein sequence, read N- to C-terminus: RuvB-like helicase 1 (484 aa).

Over residues 1 to 11 the composition is skewed to low complexity; sequence MSMAASSSTAT. The segment at 1–27 is disordered; it reads MSMAASSSTATVQPSGIITQPPPPSTL. ATP is bound at residue 87–94; that stretch reads GPPGTGKT.

This sequence belongs to the RuvB family. May form heterododecamers with RVB2. Component of the SWR1 chromatin remodeling complex, the INO80 chromatin remodeling complex, and of the R2TP complex.

It is found in the nucleus. It carries out the reaction ATP + H2O = ADP + phosphate + H(+). In terms of biological role, DNA helicase which participates in several chromatin remodeling complexes, including the SWR1 and the INO80 complexes. The SWR1 complex mediates the ATP-dependent exchange of histone H2A for the H2A variant HZT1 leading to transcriptional regulation of selected genes by chromatin remodeling. The INO80 complex remodels chromatin by shifting nucleosomes and is involved in DNA repair. Also involved in pre-rRNA processing. This chain is RuvB-like helicase 1 (RVB1), found in Cryptococcus neoformans var. neoformans serotype D (strain B-3501A) (Filobasidiella neoformans).